A 58-amino-acid polypeptide reads, in one-letter code: UPF0434 protein Swoo_1821 (58 aa).

It belongs to the UPF0434 family.

The sequence is that of UPF0434 protein Swoo_1821 from Shewanella woodyi (strain ATCC 51908 / MS32).